The following is a 252-amino-acid chain: MLKSGFYLLGGVVGAASSLPAFVAATTRSIWDPVNADDVAAVGEITALTALGHMKQSMMSDRTGRMILRTQPRVTDETLEFASRQPPGTFGHRYAQFMKFNRFTPNGRTPVAHIADPTLAYVMQRQRETHDFLHTCIGCGRTVEEEIIVKLLEWRHTGLPIGLLAVIGSLPWLSRQQIRNMELYFEWAEVNAPNQRHGEVNIPYITNVWWEYYLDKPYEQLLADTGITPIDVFLQQKKGKTALANGEAIDGK.

Zn(2+) contacts are provided by His-130, Asp-131, His-134, and Glu-146.

Belongs to the COQ4 family. Component of a multi-subunit COQ enzyme complex. Zn(2+) serves as cofactor.

The protein resides in the mitochondrion inner membrane. It catalyses the reaction a 4-hydroxy-3-methoxy-5-(all-trans-polyprenyl)benzoate + H(+) = a 2-methoxy-6-(all-trans-polyprenyl)phenol + CO2. It participates in cofactor biosynthesis; ubiquinone biosynthesis. Lyase that catalyzes the C1-decarboxylation of 4-hydroxy-3-methoxy-5-(all-trans-polyprenyl)benzoic acid into 2-methoxy-6-(all-trans-polyprenyl)phenol during ubiquinone biosynthesis. The chain is Ubiquinone biosynthesis protein COQ4 homolog 1, mitochondrial from Trypanosoma cruzi (strain CL Brener).